The chain runs to 868 residues: Leucine--tRNA ligase (868 aa).

The 'HIGH' region signature appears at 42 to 52; that stretch reads PYPSGKLHMGH. Positions 627 to 631 match the 'KMSKS' region motif; sequence KMSKS. An ATP-binding site is contributed by Lys-630.

Belongs to the class-I aminoacyl-tRNA synthetase family.

It is found in the cytoplasm. It catalyses the reaction tRNA(Leu) + L-leucine + ATP = L-leucyl-tRNA(Leu) + AMP + diphosphate. In Pseudomonas putida (strain ATCC 700007 / DSM 6899 / JCM 31910 / BCRC 17059 / LMG 24140 / F1), this protein is Leucine--tRNA ligase.